Here is a 78-residue protein sequence, read N- to C-terminus: uncharacterized protein (78 aa).

Residues 44-66 (ALYSLGFFLCTTIVIFSNIKFVV) traverse the membrane as a helical segment.

It belongs to the TatC family.

It is found in the plastid. The protein localises to the chloroplast membrane. This is an uncharacterized protein from Dictyota dichotoma.